The primary structure comprises 137 residues: Small heat shock protein IbpA (137 aa).

Residues 28 to 137 (SQGNGGYPPY…TLKPRRIEIK (110 aa)) enclose the sHSP domain.

The protein belongs to the small heat shock protein (HSP20) family. Monomer. Forms homomultimers of about 100-150 subunits at optimal growth temperatures. Conformation changes to monomers at high temperatures or high ionic concentrations.

The protein localises to the cytoplasm. In terms of biological role, associates with aggregated proteins, together with IbpB, to stabilize and protect them from irreversible denaturation and extensive proteolysis during heat shock and oxidative stress. Aggregated proteins bound to the IbpAB complex are more efficiently refolded and reactivated by the ATP-dependent chaperone systems ClpB and DnaK/DnaJ/GrpE. Its activity is ATP-independent. This is Small heat shock protein IbpA from Serratia proteamaculans (strain 568).